Consider the following 173-residue polypeptide: Large ribosomal subunit protein uL18 (173 aa).

This sequence belongs to the universal ribosomal protein uL18 family. Part of the 50S ribosomal subunit. Contacts the 5S and 23S rRNAs.

In terms of biological role, this is one of the proteins that bind and probably mediate the attachment of the 5S RNA into the large ribosomal subunit, where it forms part of the central protuberance. This chain is Large ribosomal subunit protein uL18, found in Methanococcoides burtonii (strain DSM 6242 / NBRC 107633 / OCM 468 / ACE-M).